A 381-amino-acid polypeptide reads, in one-letter code: Erythronate-4-phosphate dehydrogenase (381 aa).

Substrate-binding residues include S45 and T66. 2 residues coordinate NAD(+): D146 and T173. R206 is an active-site residue. D230 is an NAD(+) binding site. Residue E235 is part of the active site. H252 acts as the Proton donor in catalysis. G255 is an NAD(+) binding site. Y256 lines the substrate pocket.

Belongs to the D-isomer specific 2-hydroxyacid dehydrogenase family. PdxB subfamily. In terms of assembly, homodimer.

Its subcellular location is the cytoplasm. The catalysed reaction is 4-phospho-D-erythronate + NAD(+) = (R)-3-hydroxy-2-oxo-4-phosphooxybutanoate + NADH + H(+). It functions in the pathway cofactor biosynthesis; pyridoxine 5'-phosphate biosynthesis; pyridoxine 5'-phosphate from D-erythrose 4-phosphate: step 2/5. Catalyzes the oxidation of erythronate-4-phosphate to 3-hydroxy-2-oxo-4-phosphonooxybutanoate. The polypeptide is Erythronate-4-phosphate dehydrogenase (Hahella chejuensis (strain KCTC 2396)).